Consider the following 350-residue polypeptide: 3-isopropylmalate dehydrogenase (350 aa).

76–87 (GPKWDNAPKRPE) provides a ligand contact to NAD(+). Arg94, Arg104, Arg132, and Asp217 together coordinate substrate. The Mg(2+) site is built by Asp217, Asp241, and Asp245. Position 275 to 287 (275 to 287 (GSAPDIANQNIAN)) interacts with NAD(+).

Belongs to the isocitrate and isopropylmalate dehydrogenases family. LeuB type 1 subfamily. Homodimer. Requires Mg(2+) as cofactor. The cofactor is Mn(2+).

It is found in the cytoplasm. It carries out the reaction (2R,3S)-3-isopropylmalate + NAD(+) = 4-methyl-2-oxopentanoate + CO2 + NADH. It functions in the pathway amino-acid biosynthesis; L-leucine biosynthesis; L-leucine from 3-methyl-2-oxobutanoate: step 3/4. Functionally, catalyzes the oxidation of 3-carboxy-2-hydroxy-4-methylpentanoate (3-isopropylmalate) to 3-carboxy-4-methyl-2-oxopentanoate. The product decarboxylates to 4-methyl-2 oxopentanoate. This Listeria monocytogenes serotype 4b (strain F2365) protein is 3-isopropylmalate dehydrogenase.